We begin with the raw amino-acid sequence, 891 residues long: Metabotropic glutamate receptor-like protein N (891 aa).

Residues 1–399 are Extracellular-facing; the sequence is MKLYTHKINR…FKPISKTIEY (399 aa). N-linked (GlcNAc...) asparagine glycans are attached at residues Asn52, Asn85, Asn88, Asn125, Asn132, Asn224, Asn298, Asn312, Asn320, Asn325, Asn353, Asn363, and Asn375. The interval 52 to 91 is disordered; it reads NNSNSNSNNNNNNNNNNNNNNNNNNNNNNNNNNNNSNNSN. A helical transmembrane segment spans residues 400–420; the sequence is GITIVSSILIGALIIIQICII. The Cytoplasmic portion of the chain corresponds to 421 to 433; that stretch reads KYKNKPSFKSASP. A helical membrane pass occupies residues 434–454; it reads TFLIFIVIGGIFVYIGVIIWV. Residues 455–461 are Extracellular-facing; the sequence is SGVNVFT. A helical transmembrane segment spans residues 462-482; that stretch reads CNAKFWLISLGLTTMIGGIVV. Topologically, residues 483-505 are cytoplasmic; that stretch reads KNFRIWLIFDNPKLYHIKITNLQ. Residues 506–526 form a helical membrane-spanning segment; the sequence is LLPWVLGMFLLNVFLLSLITG. Over 527–555 the chain is Extracellular; the sequence is LGKLTPFKVFPNDEKFSSYEIQCEMMDGG. A helical membrane pass occupies residues 556-576; that stretch reads LIALYFLLGYFAIIVMIGIFV. Residues 577–592 lie on the Cytoplasmic side of the membrane; it reads SWKIRIVDIEEFNESK. The helical transmembrane segment at 593 to 613 threads the bilayer; that stretch reads SVAYSLYSIVFCLLIIAPLTI. At 614 to 625 the chain is on the extracellular side; the sequence is SKTGHNTEILCS. Residues 626 to 646 traverse the membrane as a helical segment; it reads GFIFIVAAIITIMFIPKFWAL. Over 647 to 891 the chain is Cytoplasmic; the sequence is KIYGAEGSNE…SDSNSDSIIQ (245 aa). Disordered stretches follow at residues 660-689, 742-827, and 869-891; these read QSSS…KKSS, NEMT…ILTP, and DEVI…SIIQ. Positions 742 to 767 are enriched in polar residues; the sequence is NEMTYNDDPTYTEPSEQPTYTESSEQ. The segment covering 772–782 has biased composition (low complexity); sequence PRTLTATPRTN. Residues 783 to 820 show a composition bias toward polar residues; sequence DLTTPRTNDLTTPRTNDLITPRTNDLSTPRTNDLNTPR. A compositionally biased stretch (acidic residues) spans 872–881; sequence IENSDSESES. Over residues 882–891 the composition is skewed to low complexity; it reads SDSNSDSIIQ.

Belongs to the G-protein coupled receptor 3 family. GABA-B receptor subfamily.

It is found in the membrane. This Dictyostelium discoideum (Social amoeba) protein is Metabotropic glutamate receptor-like protein N (grlN).